The following is a 203-amino-acid chain: Type III effector protein HopBF1 (203 aa).

The interval 1-23 is disordered; the sequence is MFNVSNNVAPSRYQGPSSTSVTP. Residues S40, Q41, K42, D107, I109, and D114 each contribute to the ATP site. D155 is a catalytic residue. Position 157 (Q157) interacts with ATP.

The protein belongs to the HopBF1 family.

The protein localises to the secreted. It localises to the host cell. The catalysed reaction is L-seryl-[protein] + ATP = O-phospho-L-seryl-[protein] + ADP + H(+). Functionally, effector protein that targets and inactivates the eukaryotic molecular chaperone HSP90 during infection. HopBF1 is recognized by HSP90 as a host client. As a result, HopBF1 phosphorylates HSP90, leading to the inactivation of the HSP90 ATPase activity and chaperone function. In vitro, can phosphorylate the recombinant yeast HSP82 (HSP90) and human HSP 90-beta on Ser-108. The protein is Type III effector protein HopBF1 of Ewingella americana (strain ATCC 33852 / DSM 4580 / CCUG 14506 / JCM 5911 / LMG 7869 / NCTC 12157 / CDC 1468-78).